The following is a 383-amino-acid chain: Probable acyl-CoA dehydrogenase YdiO (383 aa).

The protein belongs to the acyl-CoA dehydrogenase family. Requires FAD as cofactor.

It catalyses the reaction a 2,3-saturated acyl-CoA + A = a 2,3-dehydroacyl-CoA + AH2. This chain is Probable acyl-CoA dehydrogenase YdiO (ydiO), found in Escherichia coli O157:H7.